We begin with the raw amino-acid sequence, 165 residues long: MDIALDLQSIAVQEKTLVFPQFDAARAWALGSQLRELALARGHAVAIDVRTFGQPLFFALLDGATPDNVDWARRKGNVVAHFRRSSYAVGLRMQQAGATLADKHGLPVAEYASHGGAFPLAVAGAGVIGSVTVSGLPQRGDHELVVEALCAQLGHAYETLALARS.

The protein belongs to the UPF0303 family.

The sequence is that of UPF0303 protein BTH_I2506 from Burkholderia thailandensis (strain ATCC 700388 / DSM 13276 / CCUG 48851 / CIP 106301 / E264).